Consider the following 281-residue polypeptide: 4-diphosphocytidyl-2-C-methyl-D-erythritol kinase (281 aa).

The active site involves Lys-11. Residue 92–102 (LVSAGLAGGSA) participates in ATP binding. The active site involves Asp-132.

The protein belongs to the GHMP kinase family. IspE subfamily.

The enzyme catalyses 4-CDP-2-C-methyl-D-erythritol + ATP = 4-CDP-2-C-methyl-D-erythritol 2-phosphate + ADP + H(+). It functions in the pathway isoprenoid biosynthesis; isopentenyl diphosphate biosynthesis via DXP pathway; isopentenyl diphosphate from 1-deoxy-D-xylulose 5-phosphate: step 3/6. Functionally, catalyzes the phosphorylation of the position 2 hydroxy group of 4-diphosphocytidyl-2C-methyl-D-erythritol. This chain is 4-diphosphocytidyl-2-C-methyl-D-erythritol kinase, found in Ehrlichia ruminantium (strain Welgevonden).